Reading from the N-terminus, the 181-residue chain is Inner membrane-spanning protein YciB (181 aa).

Transmembrane regions (helical) follow at residues L10–I30, M50–D70, S72–S92, V118–F138, and F148–L168.

Belongs to the YciB family.

It is found in the cell inner membrane. Functionally, plays a role in cell envelope biogenesis, maintenance of cell envelope integrity and membrane homeostasis. The sequence is that of Inner membrane-spanning protein YciB from Shewanella halifaxensis (strain HAW-EB4).